The primary structure comprises 130 residues: Protein NrdI (130 aa).

Belongs to the NrdI family.

Probably involved in ribonucleotide reductase function. The protein is Protein NrdI of Bartonella bacilliformis (strain ATCC 35685 / KC583 / Herrer 020/F12,63).